We begin with the raw amino-acid sequence, 461 residues long: MVQRLTEFDTIAAISTPLGEGGISIVRVSGEDAVAIVNRLFKGKDLEKVPSHTINYGHIVDPATGQVIDEVMASVMLAPKTFTKEDIVEINCHGGIVVTNDILQLLLANGARMADPGEFTKRAFVNGRIDLTQAESVMDIIRAKTDKARQVAVKQLSGGLLTEIRALRQEILDVLANVEVNIDYPEYDEEEVTAQKLLACAEAVSGKIDRLLETAQEGQILRNGLKTAIVGRPNVGKSSLLNYLTQSDKAIVTDVAGTTRDTLEEFVSVKGVPLELIDTAGIHHTEDQVEKIGVERSKKAIAQADLILLLLDGSQELTEEDRQLLELTAGKKRIIVLNKTDLGQKLTAAEIAKESGSEVISTSIMMKENLDELEALIKKLFFKGIENSNDQVLVTNQRQAGLLAKAKQQLADVASGLEAGMPVDLVQIDFTGAWESLGEITGDSAPDELINDLFSQFCLGK.

Residues Arg-27, Glu-89, and Arg-128 each contribute to the (6S)-5-formyl-5,6,7,8-tetrahydrofolate site. Residues Gly-224–Phe-382 enclose the TrmE-type G domain. Asn-234 provides a ligand contact to K(+). GTP-binding positions include Asn-234–Ser-239, Thr-253–Thr-259, and Asp-278–Gly-281. Residue Ser-238 coordinates Mg(2+). Residues Thr-253, Val-255, and Thr-258 each coordinate K(+). Thr-259 is a binding site for Mg(2+). Lys-461 provides a ligand contact to (6S)-5-formyl-5,6,7,8-tetrahydrofolate.

It belongs to the TRAFAC class TrmE-Era-EngA-EngB-Septin-like GTPase superfamily. TrmE GTPase family. Homodimer. Heterotetramer of two MnmE and two MnmG subunits. The cofactor is K(+).

The protein localises to the cytoplasm. Exhibits a very high intrinsic GTPase hydrolysis rate. Involved in the addition of a carboxymethylaminomethyl (cmnm) group at the wobble position (U34) of certain tRNAs, forming tRNA-cmnm(5)s(2)U34. This Lactobacillus delbrueckii subsp. bulgaricus (strain ATCC BAA-365 / Lb-18) protein is tRNA modification GTPase MnmE.